The sequence spans 508 residues: H/ACA ribonucleoprotein complex subunit 4 (508 aa).

Residues 1–29 (MADVEVRKEKKKKKIKEEPLDGDDIGTLQ) are disordered. The active-site Nucleophile is the aspartate 123. The 76-residue stretch at 294–369 (HKRIIMKDSS…VVAKIKRVIM (76 aa)) folds into the PUA domain. A disordered region spans residues 423–508 (AAQEVSPTNG…KDRDRDEAQE (86 aa)). Serine 442 carries the post-translational modification Phosphoserine. Residues 442-457 (STSSVEETAAAAVSEE) show a composition bias toward low complexity. Position 443 is a phosphothreonine (threonine 443). Residues serine 444 and serine 445 each carry the phosphoserine modification. Position 449 is a phosphothreonine (threonine 449). Serine 455 carries the post-translational modification Phosphoserine. The residue at position 458 (threonine 458) is a Phosphothreonine. The span at 475–485 (EAPEAAEEEAE) shows a compositional bias: acidic residues. The span at 499-508 (KDRDRDEAQE) shows a compositional bias: basic and acidic residues.

Belongs to the pseudouridine synthase TruB family. As to quaternary structure, component of the box H/ACA small nucleolar ribonucleoprotein (H/ACA snoRNP) complex consisting of Nop60B, Gar1, NPH2 and Nop10, and associated with H/ACA-type snoRNAs. Expressed at higher levels in females than in males. In terms of tissue distribution, expressed almost exclusively in females with high levels of expression in the ovary.

It localises to the nucleus. The protein resides in the nucleolus. It catalyses the reaction a uridine in RNA = a pseudouridine in RNA. Catalytic subunit of the box H/ACA small nucleolar ribonucleoprotein (H/ACA snoRNP) complex, which catalyzes pseudouridylation of rRNA. This involves the isomerization of uridine such that the ribose is subsequently attached to C5, instead of the normal N1. Pseudouridine ('psi') residues may serve to stabilize the conformation of rRNAs. Required for ribosome biogenesis; plays a central role in ribosomal RNA processing. H/ACA snoRNP complex-dependent ribosome biogenesis is important in female germline cell differentiation during oogenesis. Essential for viability and female fertility. Required for maintenance of the germline stem cell lineage during spermatogenesis. The sequence is that of H/ACA ribonucleoprotein complex subunit 4 from Drosophila melanogaster (Fruit fly).